Here is a 634-residue protein sequence, read N- to C-terminus: Sodium-dependent multivitamin transporter (634 aa).

The next 12 membrane-spanning stretches (helical) occupy residues 23 to 43 (FSVVDYVVFGLLLVLSLVIGL), 65 to 85 (MGCLPVALSLLATFQSAVAIL), 100 to 120 (FLGCSYFLGLLIPAHIFIPVF), 142 to 162 (ICGTVTFIFQMVIYMGVALYA), 175 to 195 (LWLSVLALGIVCNIYTALGGL), 207 to 227 (LVMFLGQLVVIIVGAARVGGL), 255 to 275 (FWTLAFGGVFMMLSLYGVNQA), 295 to 315 (AVFPCQQVALCMSCLIGLVMF), 350 to 370 (LPGLFVACLFSGSLSTISSAF), 403 to 423 (FAYGLVCLGMAYISSHLGSVL), 427 to 447 (LSIFGMVGGPLLGLFCLGLFF), and 455 to 475 (AIVGLLTGLTMAFWIGIGSIV). N-linked (GlcNAc...) asparagine glycosylation is found at Asn-488 and Asn-497. Residues 526–546 (LWYSAHNSTTVIVVGLIVSLL) form a helical membrane-spanning segment.

It belongs to the sodium:solute symporter (SSF) (TC 2.A.21) family. As to quaternary structure, interacts with PDZD11. Expressed in the intestinal mucosa, liver and kidney (at protein level). Expressed in the colon.

The protein resides in the cell membrane. It localises to the apical cell membrane. The catalysed reaction is biotin(out) + 2 Na(+)(out) = biotin(in) + 2 Na(+)(in). It catalyses the reaction (R)-pantothenate(out) + 2 Na(+)(out) = (R)-pantothenate(in) + 2 Na(+)(in). It carries out the reaction (R)-lipoate(out) + 2 Na(+)(out) = (R)-lipoate(in) + 2 Na(+)(in). The enzyme catalyses iodide(out) + 2 Na(+)(out) = iodide(in) + 2 Na(+)(in). In terms of biological role, sodium-dependent multivitamin transporter that mediates the electrogenic transport of pantothenate, biotin, lipoate and iodide. Functions as a Na(+)-coupled substrate symporter where the stoichiometry of Na(+):substrate is 2:1, creating an electrochemical Na(+) gradient used as driving force for substrate uptake. Required for biotin and pantothenate uptake in the intestine across the brush border membrane. Plays a role in the maintenance of intestinal mucosa integrity, by providing the gut mucosa with biotin. Contributes to the luminal uptake of biotin and pantothenate into the brain across the blood-brain barrier. The polypeptide is Sodium-dependent multivitamin transporter (Mus musculus (Mouse)).